The chain runs to 1434 residues: Probable ATP-dependent RNA helicase spindle-E (1434 aa).

Positions 125–292 (LAAINAHPVI…FATTNSIPPV (168 aa)) constitute a Helicase ATP-binding domain. 138-145 (GETGCGKT) serves as a coordination point for ATP. Residues 238 to 241 (DEVH) carry the DEAH box motif. A Helicase C-terminal domain is found at 339-526 (KIIVIIDNME…NSVLKAKVLN (188 aa)). Positions 938 to 1001 (AGDITKGMMV…RLMPRELTEQ (64 aa)) constitute a Tudor domain.

Belongs to the DEAD box helicase family. DEAH subfamily.

Its subcellular location is the cytoplasm. The catalysed reaction is ATP + H2O = ADP + phosphate + H(+). Probable ATP-binding RNA helicase which plays a central role during spermatogenesis and oogenesis by repressing transposable elements and preventing their mobilization, which is essential for the germline integrity. Acts via the piRNA metabolic process, which mediates the repression of transposable elements during meiosis by forming complexes composed of piRNAs and Piwi and govern the methylation and subsequent repression of transposons. Involved in the repression of LTR retrotransposon copia. Also involved in telomere regulation by repressing specialized telomeric retroelements HeT-A, TAHRE, and TART; Drosophila telomeres being maintained by transposition of specialized telomeric retroelements. Involved in telomeric trans-silencing, a repression mechanism by which a transposon or a transgene inserted in subtelomeric heterochromatin has the capacity to repress in trans in the female germline, a homologous transposon, or transgene located in euchromatin. Involved in the repression of testis-expressed Stellate genes by the homologous Su(Ste) repeats. Required for anteroposterior and dorsoventral axis formation during oogenesis. The protein is Probable ATP-dependent RNA helicase spindle-E (spn-E) of Drosophila sechellia (Fruit fly).